A 347-amino-acid chain; its full sequence is Globoside alpha-1,3-N-acetylgalactosaminyltransferase 1 (347 aa).

Residues 1–5 (MHRRR) lie on the Cytoplasmic side of the membrane. Residues 6–26 (LALGLGFCLLAGTSLSVLWVY) traverse the membrane as a helical; Signal-anchor for type II membrane protein segment. Over 27-347 (LENWLPVSYV…LDKDISCLRS (321 aa)) the chain is Lumenal. Asparagine 108 carries an N-linked (GlcNAc...) asparagine glycan. Substrate is bound by residues 116-121 (FAVGKY), 206-208 (DVD), and 228-231 (HPSY). The Mn(2+) site is built by aspartate 206 and aspartate 208. Residue glutamate 298 is the Nucleophile of the active site.

The protein belongs to the glycosyltransferase 6 family. Requires Mn(2+) as cofactor. As to expression, widely expressed. Expressed at higher level in placenta, ovary and peripheral blood leukocyte, whereas it is weakly expressed in liver, thymus, and testis. Expressed in bone marrow erythroid cells.

The protein resides in the golgi apparatus membrane. The protein operates within protein modification; protein glycosylation. Has lost the ability to synthesize Forssman glycolipid antigen (FORS1/FG). Might have acquired an alternative function in glycosphingolipid metabolism, but it remains to be established. It appears to have drifted more slowly than confirmed pseudogenes in the glycosyltransferase 6 family, suggesting that it has remained under evolutionary pressure. The chain is Globoside alpha-1,3-N-acetylgalactosaminyltransferase 1 from Homo sapiens (Human).